A 236-amino-acid chain; its full sequence is Small ribosomal subunit protein uS2c (236 aa).

Belongs to the universal ribosomal protein uS2 family.

Its subcellular location is the plastid. The protein resides in the chloroplast. The chain is Small ribosomal subunit protein uS2c (rps2) from Lepidium virginicum (Virginia pepperweed).